The primary structure comprises 218 residues: Pyridoxine/pyridoxamine 5'-phosphate oxidase (218 aa).

Substrate contacts are provided by residues 14 to 17 (RREY) and Lys72. FMN-binding positions include 67 to 72 (RIVLLK), 82 to 83 (YT), Arg88, Lys89, and Gln111. Tyr129, Arg133, and Ser137 together coordinate substrate. Residues 146–147 (QS) and Trp191 each bind FMN. 197–199 (RLH) contributes to the substrate binding site. Arg201 contacts FMN.

The protein belongs to the pyridoxamine 5'-phosphate oxidase family. Homodimer. FMN serves as cofactor.

It catalyses the reaction pyridoxamine 5'-phosphate + O2 + H2O = pyridoxal 5'-phosphate + H2O2 + NH4(+). The catalysed reaction is pyridoxine 5'-phosphate + O2 = pyridoxal 5'-phosphate + H2O2. Its pathway is cofactor metabolism; pyridoxal 5'-phosphate salvage; pyridoxal 5'-phosphate from pyridoxamine 5'-phosphate: step 1/1. The protein operates within cofactor metabolism; pyridoxal 5'-phosphate salvage; pyridoxal 5'-phosphate from pyridoxine 5'-phosphate: step 1/1. Its function is as follows. Catalyzes the oxidation of either pyridoxine 5'-phosphate (PNP) or pyridoxamine 5'-phosphate (PMP) into pyridoxal 5'-phosphate (PLP). The polypeptide is Pyridoxine/pyridoxamine 5'-phosphate oxidase (Escherichia coli O7:K1 (strain IAI39 / ExPEC)).